An 88-amino-acid polypeptide reads, in one-letter code: Homeobox protein knotted-1-like 11 (88 aa).

The region spanning 4-24 is the ELK domain; sequence ELKEMLLKKYSGCLSRLRSEF. Residues 25 to 88 constitute a DNA-binding region (homeobox; TALE-type); that stretch reads LKKRKKGKLP…NQRKRHWKPS (64 aa).

This sequence belongs to the TALE/KNOX homeobox family.

The protein resides in the nucleus. Functionally, probably binds to the DNA sequence 5'-TGAC-3'. The chain is Homeobox protein knotted-1-like 11 (KNOX11) from Zea mays (Maize).